Reading from the N-terminus, the 236-residue chain is Phosphoribosylaminoimidazole-succinocarboxamide synthase (236 aa).

This sequence belongs to the SAICAR synthetase family.

The enzyme catalyses 5-amino-1-(5-phospho-D-ribosyl)imidazole-4-carboxylate + L-aspartate + ATP = (2S)-2-[5-amino-1-(5-phospho-beta-D-ribosyl)imidazole-4-carboxamido]succinate + ADP + phosphate + 2 H(+). The protein operates within purine metabolism; IMP biosynthesis via de novo pathway; 5-amino-1-(5-phospho-D-ribosyl)imidazole-4-carboxamide from 5-amino-1-(5-phospho-D-ribosyl)imidazole-4-carboxylate: step 1/2. The sequence is that of Phosphoribosylaminoimidazole-succinocarboxamide synthase from Pseudomonas putida (strain ATCC 700007 / DSM 6899 / JCM 31910 / BCRC 17059 / LMG 24140 / F1).